Reading from the N-terminus, the 231-residue chain is Protoporphyrinogen IX dehydrogenase [quinone] (231 aa).

The 171-residue stretch at 8–178 (CLMLYSTTDG…AVRRFASDFA (171 aa)) folds into the Flavodoxin-like domain. FMN is bound by residues 14–18 (TTDGH) and 90–158 (FFSV…ETDS). Residues 208 to 228 (CLLAIVGMSAAVIVGIRIIAA) traverse the membrane as a helical segment.

It belongs to the HemG family. Requires FMN as cofactor.

It is found in the membrane. The enzyme catalyses protoporphyrinogen IX + 3 a menaquinone = protoporphyrin IX + 3 a menaquinol. It catalyses the reaction protoporphyrinogen IX + 3 a ubiquinone = protoporphyrin IX + 3 a ubiquinol. The catalysed reaction is protoporphyrinogen IX + 3 a quinone = protoporphyrin IX + 3 a quinol. Its pathway is porphyrin-containing compound metabolism; protoporphyrin-IX biosynthesis; protoporphyrin-IX from protoporphyrinogen-IX: step 1/1. In terms of biological role, in E.coli extracts under anerobic conditions catalyzes the 6-electron oxidation of protoporphyrinogen IX to form protoporphyrin IX, transferring electrons to fumarate reductase, presumably via menaquinone. In vitro under aerobic conditions forms protoporphyrin IX using ubiquinone as an electron acceptor. Complements an E.coli hemG deletion, allowing normal growth in vivo. This Leishmania major protein is Protoporphyrinogen IX dehydrogenase [quinone].